Consider the following 222-residue polypeptide: 2-C-methyl-D-erythritol 4-phosphate cytidylyltransferase (222 aa).

This sequence belongs to the IspD/TarI cytidylyltransferase family. IspD subfamily.

The catalysed reaction is 2-C-methyl-D-erythritol 4-phosphate + CTP + H(+) = 4-CDP-2-C-methyl-D-erythritol + diphosphate. Its pathway is isoprenoid biosynthesis; isopentenyl diphosphate biosynthesis via DXP pathway; isopentenyl diphosphate from 1-deoxy-D-xylulose 5-phosphate: step 2/6. Its function is as follows. Catalyzes the formation of 4-diphosphocytidyl-2-C-methyl-D-erythritol from CTP and 2-C-methyl-D-erythritol 4-phosphate (MEP). This Thermotoga maritima (strain ATCC 43589 / DSM 3109 / JCM 10099 / NBRC 100826 / MSB8) protein is 2-C-methyl-D-erythritol 4-phosphate cytidylyltransferase.